We begin with the raw amino-acid sequence, 485 residues long: D-alanine--D-alanyl carrier protein ligase (485 aa).

An ATP-binding site is contributed by 144-145 (TS). Residue D189 participates in D-alanine binding. 284–289 (NTYGPT) contacts ATP. V293 serves as a coordination point for D-alanine. D365 and K473 together coordinate ATP. D-alanine is bound at residue K473.

Belongs to the ATP-dependent AMP-binding enzyme family. DltA subfamily.

Its subcellular location is the cytoplasm. The catalysed reaction is holo-[D-alanyl-carrier protein] + D-alanine + ATP = D-alanyl-[D-alanyl-carrier protein] + AMP + diphosphate. It participates in cell wall biogenesis; lipoteichoic acid biosynthesis. Catalyzes the first step in the D-alanylation of lipoteichoic acid (LTA), the activation of D-alanine and its transfer onto the D-alanyl carrier protein (Dcp) DltC. In an ATP-dependent two-step reaction, forms a high energy D-alanyl-AMP intermediate, followed by transfer of the D-alanyl residue as a thiol ester to the phosphopantheinyl prosthetic group of the Dcp. D-alanylation of LTA plays an important role in modulating the properties of the cell wall in Gram-positive bacteria, influencing the net charge of the cell wall. The chain is D-alanine--D-alanyl carrier protein ligase from Staphylococcus epidermidis (strain ATCC 35984 / DSM 28319 / BCRC 17069 / CCUG 31568 / BM 3577 / RP62A).